The chain runs to 230 residues: UPF0758 protein Glov_0523 (230 aa).

The region spanning 108-230 (RFTSPAQVFD…YFSFVESGLL (123 aa)) is the MPN domain. Positions 179, 181, and 192 each coordinate Zn(2+). A JAMM motif motif is present at residues 179–192 (HNHPSGDPAPSRED).

The protein belongs to the UPF0758 family.

This is UPF0758 protein Glov_0523 from Trichlorobacter lovleyi (strain ATCC BAA-1151 / DSM 17278 / SZ) (Geobacter lovleyi).